We begin with the raw amino-acid sequence, 394 residues long: Ribose-phosphate pyrophosphokinase 5, chloroplastic (394 aa).

The N-terminal 33 residues, 1–33 (MASIVQPSPTFPALNLRRSSLIRPPSSVRFPLK), are a transit peptide targeting the chloroplast. Positions 202, 204, 213, and 217 each coordinate Mg(2+). Residues 288–303 (GKVAIMVDDMIDTAGT) form a binding of phosphoribosylpyrophosphate region.

It belongs to the ribose-phosphate pyrophosphokinase family.

It localises to the plastid. It is found in the chloroplast. It catalyses the reaction D-ribose 5-phosphate + ATP = 5-phospho-alpha-D-ribose 1-diphosphate + AMP + H(+). The sequence is that of Ribose-phosphate pyrophosphokinase 5, chloroplastic (PRS5) from Arabidopsis thaliana (Mouse-ear cress).